Consider the following 130-residue polypeptide: UPF0146 protein AF_0739.1 (130 aa).

Belongs to the UPF0146 family.

This Archaeoglobus fulgidus (strain ATCC 49558 / DSM 4304 / JCM 9628 / NBRC 100126 / VC-16) protein is UPF0146 protein AF_0739.1.